Consider the following 105-residue polypeptide: Flagellar transcriptional regulator FlhD (105 aa).

This sequence belongs to the FlhD family. In terms of assembly, homodimer; disulfide-linked. Forms a heterohexamer composed of two FlhC and four FlhD subunits. Each FlhC binds a FlhD dimer, forming a heterotrimer, and a hexamer assembles by dimerization of two heterotrimers.

It is found in the cytoplasm. In terms of biological role, functions in complex with FlhC as a master transcriptional regulator that regulates transcription of several flagellar and non-flagellar operons by binding to their promoter region. Activates expression of class 2 flagellar genes, including fliA, which is a flagellum-specific sigma factor that turns on the class 3 genes. Also regulates genes whose products function in a variety of physiological pathways. In Cupriavidus pinatubonensis (strain JMP 134 / LMG 1197) (Cupriavidus necator (strain JMP 134)), this protein is Flagellar transcriptional regulator FlhD.